A 110-amino-acid polypeptide reads, in one-letter code: Histone H2A.1 (110 aa).

Belongs to the histone H2A family. In terms of assembly, the nucleosome is a histone octamer containing two molecules each of H2A, H2B, H3 and H4 assembled in one H3-H4 heterotetramer and two H2A-H2B heterodimers. The octamer wraps approximately 147 bp of DNA. As to expression, expressed in the generative cell within the bicellular pollen. Not detected in other reproductive or vegetative tissues.

It localises to the nucleus. It is found in the chromosome. Core component of nucleosome. Nucleosomes wrap and compact DNA into chromatin, limiting DNA accessibility to the cellular machineries which require DNA as a template. Histones thereby play a central role in transcription regulation, DNA repair, DNA replication and chromosomal stability. DNA accessibility is regulated via a complex set of post-translational modifications of histones, also called histone code, and nucleosome remodeling. This is Histone H2A.1 (gcH2A) from Lilium longiflorum (Trumpet lily).